Reading from the N-terminus, the 203-residue chain is MEKFTVLTGVAAPLRIMNVDTDMIIPARYLKTIKRTGLGAGLFSSLRFDDTGAERPDFVLNQRAYRNATILIAGDNFGCGSSREHAPWALLDYGIRCVIAPSFADIFFNNCFKNGILPIALPEPVVEKLMAAADNGANATFTVDLEAQRIAMPDGESIPFEVEPFRRECLLNGWDDIGLTLRQSERIDAYEARQRTEQPWALG.

The protein belongs to the LeuD family. LeuD type 1 subfamily. Heterodimer of LeuC and LeuD.

The catalysed reaction is (2R,3S)-3-isopropylmalate = (2S)-2-isopropylmalate. It participates in amino-acid biosynthesis; L-leucine biosynthesis; L-leucine from 3-methyl-2-oxobutanoate: step 2/4. Functionally, catalyzes the isomerization between 2-isopropylmalate and 3-isopropylmalate, via the formation of 2-isopropylmaleate. In Rhodospirillum centenum (strain ATCC 51521 / SW), this protein is 3-isopropylmalate dehydratase small subunit.